The primary structure comprises 784 residues: E3 UFM1-protein ligase 1 homolog (784 aa).

The segment at 405–480 (SVSTQELEDD…RGGGAGNKKA (76 aa)) is disordered. Basic residues predominate over residues 444–454 (KSTKKHQRGKA).

This sequence belongs to the UFL1 family.

Its function is as follows. E3 UFM1-protein ligase that mediates ufmylation of target proteins. In Drosophila yakuba (Fruit fly), this protein is E3 UFM1-protein ligase 1 homolog.